Here is a 305-residue protein sequence, read N- to C-terminus: uncharacterized protein (305 aa).

The tract at residues 255-305 (RCHRAGLRSPPRTREPLWSLGPSGGEAAGEAPGGKGPPTPVLPHARRAGAA) is disordered. A compositionally biased stretch (gly residues) spans 276-288 (PSGGEAAGEAPGG).

This is an uncharacterized protein from Streptomyces fradiae (Streptomyces roseoflavus).